A 318-amino-acid polypeptide reads, in one-letter code: Serine protease 41 (318 aa).

The N-terminal stretch at 1-19 (MGARGALLLALLLARAGLG) is a signal peptide. Positions 20-54 (KPGELGALQAGPGAARRPGGGGREEACGHREIHAL) are excised as a propeptide. Positions 55–297 (VAGGVESARG…YFHWIRRVMS (243 aa)) constitute a Peptidase S1 domain. Residues C80 and C96 are joined by a disulfide bond. Residues H95 and D147 each act as charge relay system in the active site. Intrachain disulfides connect C181–C255, C215–C234, and C245–C273. Residue N211 is glycosylated (N-linked (GlcNAc...) asparagine). S249 functions as the Charge relay system in the catalytic mechanism. N284 carries N-linked (GlcNAc...) asparagine glycosylation. Residue S299 is the site of GPI-anchor amidated serine attachment. A propeptide spans 300–318 (TPRPNPSQLLLLLALLWAP) (removed in mature form).

It belongs to the peptidase S1 family. N-glycosylated.

It is found in the cell membrane. The protein is Serine protease 41 of Homo sapiens (Human).